The sequence spans 312 residues: Elongation factor Ts (312 aa).

An involved in Mg(2+) ion dislocation from EF-Tu region spans residues 84-87 (TDFV).

This sequence belongs to the EF-Ts family.

Its subcellular location is the cytoplasm. In terms of biological role, associates with the EF-Tu.GDP complex and induces the exchange of GDP to GTP. It remains bound to the aminoacyl-tRNA.EF-Tu.GTP complex up to the GTP hydrolysis stage on the ribosome. In Caulobacter vibrioides (strain ATCC 19089 / CIP 103742 / CB 15) (Caulobacter crescentus), this protein is Elongation factor Ts.